Consider the following 460-residue polypeptide: 3-isopropylmalate dehydratase large subunit (460 aa).

Positions 338, 398, and 401 each coordinate [4Fe-4S] cluster.

It belongs to the aconitase/IPM isomerase family. LeuC type 1 subfamily. Heterodimer of LeuC and LeuD. Requires [4Fe-4S] cluster as cofactor.

The enzyme catalyses (2R,3S)-3-isopropylmalate = (2S)-2-isopropylmalate. Its pathway is amino-acid biosynthesis; L-leucine biosynthesis; L-leucine from 3-methyl-2-oxobutanoate: step 2/4. In terms of biological role, catalyzes the isomerization between 2-isopropylmalate and 3-isopropylmalate, via the formation of 2-isopropylmaleate. This Streptococcus thermophilus (strain ATCC BAA-491 / LMD-9) protein is 3-isopropylmalate dehydratase large subunit.